The primary structure comprises 62 residues: Conotoxin TeAr151 (62 aa).

An N-terminal signal peptide occupies residues 1–22 (MRCLPVFVVLLLLIASAPSVDA). Positions 23 to 47 (QPKTKDDVPLAPLHDNIQNTLQTLR) are excised as a propeptide. The residue at position 55 (Met55) is a Methionine sulfoxide; partial. Ser60 is subject to Serine amide.

Belongs to the conotoxin T superfamily. Post-translationally, contains 2 disulfide bonds. In terms of processing, contains 2 disulfide bonds that can be either 'C1-C3, C2-C4' or 'C1-C4, C2-C3', since these disulfide connectivities have been observed for conotoxins with cysteine framework V (for examples, see AC P0DQQ7 and AC P81755).. In terms of tissue distribution, expressed by the venom duct. Is mostly present in part 5 of the venom duct (distal part near the pharynx), and less abundantly present in part 4 of the venom duct.

It is found in the secreted. The protein is Conotoxin TeAr151 of Conus textile (Cloth-of-gold cone).